Here is a 360-residue protein sequence, read N- to C-terminus: UDP-N-acetylglucosamine--N-acetylmuramyl-(pentapeptide) pyrophosphoryl-undecaprenol N-acetylglucosamine transferase (360 aa).

S198 and Q289 together coordinate UDP-N-acetyl-alpha-D-glucosamine.

This sequence belongs to the glycosyltransferase 28 family. MurG subfamily.

It localises to the cell membrane. The enzyme catalyses Mur2Ac(oyl-L-Ala-gamma-D-Glu-L-Lys-D-Ala-D-Ala)-di-trans,octa-cis-undecaprenyl diphosphate + UDP-N-acetyl-alpha-D-glucosamine = beta-D-GlcNAc-(1-&gt;4)-Mur2Ac(oyl-L-Ala-gamma-D-Glu-L-Lys-D-Ala-D-Ala)-di-trans,octa-cis-undecaprenyl diphosphate + UDP + H(+). It participates in cell wall biogenesis; peptidoglycan biosynthesis. Functionally, cell wall formation. Catalyzes the transfer of a GlcNAc subunit on undecaprenyl-pyrophosphoryl-MurNAc-pentapeptide (lipid intermediate I) to form undecaprenyl-pyrophosphoryl-MurNAc-(pentapeptide)GlcNAc (lipid intermediate II). The polypeptide is UDP-N-acetylglucosamine--N-acetylmuramyl-(pentapeptide) pyrophosphoryl-undecaprenol N-acetylglucosamine transferase (Streptococcus pyogenes serotype M3 (strain SSI-1)).